Consider the following 382-residue polypeptide: Lipid-A-disaccharide synthase (382 aa).

The protein belongs to the LpxB family.

The catalysed reaction is a lipid X + a UDP-2-N,3-O-bis[(3R)-3-hydroxyacyl]-alpha-D-glucosamine = a lipid A disaccharide + UDP + H(+). It functions in the pathway bacterial outer membrane biogenesis; LPS lipid A biosynthesis. In terms of biological role, condensation of UDP-2,3-diacylglucosamine and 2,3-diacylglucosamine-1-phosphate to form lipid A disaccharide, a precursor of lipid A, a phosphorylated glycolipid that anchors the lipopolysaccharide to the outer membrane of the cell. The polypeptide is Lipid-A-disaccharide synthase (Dechloromonas aromatica (strain RCB)).